The sequence spans 1040 residues: Myoblast growth factor receptor egl-15 (1040 aa).

Residues 1-19 (MSYFLASCLGVGLLSTVSC) form the signal peptide. The Extracellular portion of the chain corresponds to 20-525 (SLQGLTSHYR…PKIDRWTTSD (506 aa)). The Ig-like C2-type 1 domain maps to 33–125 (PRFKHVANER…GQISRNFTVE (93 aa)). C55 and C109 form a disulfide bridge. N121 carries N-linked (GlcNAc...) asparagine glycosylation. The span at 234–257 (VHDSEESPSESRTEFINADEKENK) shows a compositional bias: basic and acidic residues. Residues 234 to 267 (VHDSEESPSESRTEFINADEKENKEDEEEDYSVS) form a disordered region. N-linked (GlcNAc...) asparagine glycans are attached at residues N280 and N299. Ig-like C2-type domains lie at 287–383 (PYFK…FHVI) and 391–501 (PPII…ATLT). Cysteines 314 and 367 form a disulfide. 7 N-linked (GlcNAc...) asparagine glycosylation sites follow: N401, N407, N433, N440, N449, N474, and N497. C414 and C485 are oxidised to a cystine. The chain crosses the membrane as a helical span at residues 526 to 549 (YIFTTILLFLLLAATLFGILFMVC). Residues 550 to 1040 (KQTLHKKGFM…NNNSMSKPEF (491 aa)) lie on the Cytoplasmic side of the membrane. The 292-residue stretch at 640 to 931 (LSLVHMLGEG…KTIVDYLDWM (292 aa)) folds into the Protein kinase domain. ATP contacts are provided by residues 646-654 (LGEGAFGEV) and K672. D797 serves as the catalytic Proton acceptor. The residue at position 828 (Y828) is a Phosphotyrosine; by autocatalysis. 2 disordered regions span residues 952–984 (ERSTASGPVSPMESFQKKRKHRPLSAPVNLPSE) and 1021–1040 (TPETSQRIPSNNNSMSKPEF). Over residues 1022–1040 (PETSQRIPSNNNSMSKPEF) the composition is skewed to polar residues.

Belongs to the protein kinase superfamily. Tyr protein kinase family. Fibroblast growth factor receptor subfamily. Mg(2+) serves as cofactor. In terms of processing, activity is regulated by the phosphatase clr-1, however it is not known whether clr-1 acts directly on egl-15.

It is found in the membrane. The catalysed reaction is L-tyrosyl-[protein] + ATP = O-phospho-L-tyrosyl-[protein] + ADP + H(+). Functionally, receptor tyrosine kinase required for larval development. May phosphorylate adapter protein soc-1 which in turn may result in the recruitment and/or activation of phosphatase ptp-2. May activate the Ras/MAPK kinase signaling pathway which includes sem-5, sos-1, let-60/Ras, lin-45/Raf, mek-2 and mpk-1. Acts in the hypodermis to regulate axon growth and fluid homeostasis. Activates protein degradation in muscles. Probably following interaction with ligand let-756, negatively regulates membrane protrusion from body wall muscles during larval development. Plays a role in nicotinic acetylcholine receptor (nAChR)-mediated sensitivity to nicotine. Regulates synaptic levels of nAChR subunit lev-1 in the nerve cord. Its function is as follows. Affects the maintenance of axon position without affecting axon growth. Interaction with egl-17 is required for the guidance of sex myoblast migration during gonad development. Interaction with let-756 appears to play a role in maintaining body morphology at higher temperatures. The chain is Myoblast growth factor receptor egl-15 (egl-15) from Caenorhabditis elegans.